The following is a 633-amino-acid chain: ATP-dependent rRNA helicase SPB4 (633 aa).

Positions 11-39 (FSALTPALSEWIIDAVDAMGFVKTTPVQH) match the Q motif motif. The Helicase ATP-binding domain occupies 42-253 (IPMFMKNSDV…RVGLRNPVRI (212 aa)). 55–62 (AVTGSGKT) provides a ligand contact to ATP. Residues 119-131 (EPDDEDTDMEDAD) show a composition bias toward acidic residues. The segment at 119–140 (EPDDEDTDMEDADTPPKPTFPP) is disordered. Residues 201 to 204 (DEAD) carry the DEAD box motif. In terms of domain architecture, Helicase C-terminal spans 292–446 (AMKKILSSLQ…EITVTDEDAK (155 aa)). A coiled-coil region spans residues 530–629 (AYKDKAREKL…KQEAEDADFE (100 aa)). Composition is skewed to basic and acidic residues over residues 547 to 581 (DKEE…EVRR) and 588 to 623 (REHE…KQEA). Residues 547–633 (DKEEGTKKKQ…EDADFEGFSD (87 aa)) are disordered. The span at 624-633 (EDADFEGFSD) shows a compositional bias: acidic residues.

Belongs to the DEAD box helicase family. DDX55/SPB4 subfamily. As to quaternary structure, component of pre-60S ribosomal complexes.

It localises to the nucleus. The protein resides in the nucleolus. The catalysed reaction is ATP + H2O = ADP + phosphate + H(+). Functionally, ATP-binding RNA helicase involved in the biogenesis of 60S ribosomal subunits. Binds 90S pre-ribosomal particles and dissociates from pre-60S ribosomal particles after processing of 27SB pre-rRNA. Required for the normal formation of 18S rRNA through the processing of pre-rRNAs at sites A0, A1 and A2, and the normal formation of 25S and 5.8S rRNAs through the processing of pre-rRNAs at sites C1 and C2. This chain is ATP-dependent rRNA helicase SPB4, found in Phaeosphaeria nodorum (strain SN15 / ATCC MYA-4574 / FGSC 10173) (Glume blotch fungus).